Consider the following 453-residue polypeptide: Ribulose bisphosphate carboxylase large chain (453 aa).

Positions 1–2 (MS) are excised as a propeptide. Proline 3 carries the N-acetylproline modification. Lysine 14 is modified (N6,N6,N6-trimethyllysine). Asparagine 123 and threonine 173 together coordinate substrate. Lysine 175 (proton acceptor) is an active-site residue. Lysine 177 lines the substrate pocket. 3 residues coordinate Mg(2+): lysine 201, aspartate 203, and glutamate 204. Lysine 201 carries the N6-carboxylysine modification. Histidine 294 (proton acceptor) is an active-site residue. Positions 295, 327, and 379 each coordinate substrate.

The protein belongs to the RuBisCO large chain family. Type I subfamily. Heterohexadecamer of 8 large chains and 8 small chains; disulfide-linked. The disulfide link is formed within the large subunit homodimers. Mg(2+) serves as cofactor. Post-translationally, the disulfide bond which can form in the large chain dimeric partners within the hexadecamer appears to be associated with oxidative stress and protein turnover.

The protein localises to the plastid. It is found in the chloroplast. It catalyses the reaction 2 (2R)-3-phosphoglycerate + 2 H(+) = D-ribulose 1,5-bisphosphate + CO2 + H2O. The catalysed reaction is D-ribulose 1,5-bisphosphate + O2 = 2-phosphoglycolate + (2R)-3-phosphoglycerate + 2 H(+). In terms of biological role, ruBisCO catalyzes two reactions: the carboxylation of D-ribulose 1,5-bisphosphate, the primary event in carbon dioxide fixation, as well as the oxidative fragmentation of the pentose substrate in the photorespiration process. Both reactions occur simultaneously and in competition at the same active site. This chain is Ribulose bisphosphate carboxylase large chain, found in Phuopsis stylosa (Caucasian crosswort).